A 200-amino-acid polypeptide reads, in one-letter code: MAGLKQHSGLVVPLDAANVDTDAIIPKQFLQAITRVGFGKHLFHEWRYLDAEETQLNPDFVLNFPQYQGATILLARKNLGCGSSREHAPWALADYGFKVMIAPSFADIFYNNSLNNHMLPIRLSEEEVEEIFQWVWANEGKQIHIDLEAMTVTVGDKIYRFELDEFRRHCLLNGLDNIGLTLQHEDAITAYESKIPAFLR.

It belongs to the LeuD family. LeuD type 1 subfamily. Heterodimer of LeuC and LeuD.

The enzyme catalyses (2R,3S)-3-isopropylmalate = (2S)-2-isopropylmalate. The protein operates within amino-acid biosynthesis; L-leucine biosynthesis; L-leucine from 3-methyl-2-oxobutanoate: step 2/4. In terms of biological role, catalyzes the isomerization between 2-isopropylmalate and 3-isopropylmalate, via the formation of 2-isopropylmaleate. This is 3-isopropylmalate dehydratase small subunit from Actinobacillus pleuropneumoniae serotype 3 (strain JL03).